We begin with the raw amino-acid sequence, 80 residues long: Kunitz-type serine protease inhibitor LmKTT-1b (80 aa).

Residues M1–A21 form the signal peptide. Positions C25–C75 constitute a BPTI/Kunitz inhibitor domain. 3 disulfide bridges follow: C25/C75, C50/C71, and C72/C80.

It belongs to the venom Kunitz-type family. Scorpion delta-Ktx subfamily. Delta-Ktx 2 sub-subfamily. Expressed by the venom gland.

It is found in the secreted. Its function is as follows. Serine protease inhibitor that inhibits trypsin at a molar ratio of 1:1 (Ki=160 nM). Is thermostable. In Lychas mucronatus (Chinese swimming scorpion), this protein is Kunitz-type serine protease inhibitor LmKTT-1b.